Here is a 169-residue protein sequence, read N- to C-terminus: Large ribosomal subunit protein uL5 (169 aa).

The protein belongs to the universal ribosomal protein uL5 family. As to quaternary structure, part of the 50S ribosomal subunit; contacts the 5S rRNA and probably tRNA. Forms a bridge to the 30S subunit in the 70S ribosome.

Functionally, this is one of the proteins that bind and probably mediate the attachment of the 5S RNA into the large ribosomal subunit, where it forms part of the central protuberance. In the 70S ribosome it contacts protein S13 of the 30S subunit (bridge B1b), connecting the 2 subunits; this bridge is implicated in subunit movement. May contact the P site tRNA; the 5S rRNA and some of its associated proteins might help stabilize positioning of ribosome-bound tRNAs. The polypeptide is Large ribosomal subunit protein uL5 (Methanococcoides burtonii (strain DSM 6242 / NBRC 107633 / OCM 468 / ACE-M)).